A 283-amino-acid polypeptide reads, in one-letter code: Phosphatidylserine decarboxylase proenzyme (283 aa).

Catalysis depends on charge relay system; for autoendoproteolytic cleavage activity residues D89, H146, and S249. S249 functions as the Schiff-base intermediate with substrate; via pyruvic acid; for decarboxylase activity in the catalytic mechanism. At S249 the chain carries Pyruvic acid (Ser); by autocatalysis.

Belongs to the phosphatidylserine decarboxylase family. PSD-B subfamily. Prokaryotic type I sub-subfamily. Heterodimer of a large membrane-associated beta subunit and a small pyruvoyl-containing alpha subunit. It depends on pyruvate as a cofactor. Is synthesized initially as an inactive proenzyme. Formation of the active enzyme involves a self-maturation process in which the active site pyruvoyl group is generated from an internal serine residue via an autocatalytic post-translational modification. Two non-identical subunits are generated from the proenzyme in this reaction, and the pyruvate is formed at the N-terminus of the alpha chain, which is derived from the carboxyl end of the proenzyme. The autoendoproteolytic cleavage occurs by a canonical serine protease mechanism, in which the side chain hydroxyl group of the serine supplies its oxygen atom to form the C-terminus of the beta chain, while the remainder of the serine residue undergoes an oxidative deamination to produce ammonia and the pyruvoyl prosthetic group on the alpha chain. During this reaction, the Ser that is part of the protease active site of the proenzyme becomes the pyruvoyl prosthetic group, which constitutes an essential element of the active site of the mature decarboxylase.

The protein resides in the cell membrane. It catalyses the reaction a 1,2-diacyl-sn-glycero-3-phospho-L-serine + H(+) = a 1,2-diacyl-sn-glycero-3-phosphoethanolamine + CO2. Its pathway is phospholipid metabolism; phosphatidylethanolamine biosynthesis; phosphatidylethanolamine from CDP-diacylglycerol: step 2/2. In terms of biological role, catalyzes the formation of phosphatidylethanolamine (PtdEtn) from phosphatidylserine (PtdSer). This Legionella pneumophila (strain Lens) protein is Phosphatidylserine decarboxylase proenzyme.